The primary structure comprises 849 residues: Ribosome biogenesis protein ERB1 (849 aa).

The segment at 1 to 130 (MARNSIKKSP…PKDDDLSRIN (130 aa)) is disordered. 2 stretches are compositionally biased toward acidic residues: residues 29–44 (EAEEDSNDEESEDELN) and 51–123 (ASDD…EPKD). The required for interaction with NOP7 stretch occupies residues 286 to 405 (RFVPSKHEAK…LRQVPGYQDS (120 aa)). Residues 405–441 (SVRERFERSLDLYLAPRVRHNKLNIDPDSLIPDLPSP) are required for interaction with YTM1. WD repeat units lie at residues 457 to 496 (GHTGKIRTISIDPQGLWLATGSDDGSVRIWEILTGRQVYK) and 505 to 545 (NNED…FDIE). Basic and acidic residues predominate over residues 569 to 581 (KISSQKEEDNKES). Residues 569 to 619 (KISSQKEEDNKESDNEDEDEEEDNDDDDDDDEPETSSTVEPKKEVAKWYPP) are disordered. The span at 582-602 (DNEDEDEEEDNDDDDDDDEPE) shows a compositional bias: acidic residues. WD repeat units follow at residues 633–675 (QCRK…SQSP), 678–716 (KSKGIIMDAKFHPFKPQLFVASQRQIKIYDLAQQVLLKK), 719–758 (PGVRLLSTIDIHPRGDNLIAGSYDKRVLWHDLDLSATPYK), 762–802 (YHEK…DLMT), and 818–849 (INQIGILDLIWHPKEPWLFSAGADGTARLWTT).

It belongs to the WD repeat BOP1/ERB1 family. As to quaternary structure, component of the NOP7 complex, composed of ERB1, NOP7 and YTM1. The complex is held together by ERB1, which interacts with NOP7 via its N-terminal domain and with YTM1 via a high-affinity interaction between the seven-bladed beta-propeller domains of the 2 proteins. The NOP7 complex associates with the 66S pre-ribosome.

The protein resides in the nucleus. Its subcellular location is the nucleolus. It localises to the nucleoplasm. Component of the NOP7 complex, which is required for maturation of the 25S and 5.8S ribosomal RNAs and formation of the 60S ribosome. This Candida albicans (strain SC5314 / ATCC MYA-2876) (Yeast) protein is Ribosome biogenesis protein ERB1.